The sequence spans 462 residues: MASPAFHPLDCPDPAQVSFGTDGLRGHVGSAITSTLALQVGFWCGRVLPADGPVLIGMDSRTSGSMLVSALAAGLTAAGREVWTLGLCPTPAVPGLIRRFGAAGGLMVSASHNPPEDNGIKVFGADGSKLGSALQSRIEAGLRGEEPASAQAHAFGASHQRSDLLDLYKQDLLSSVRHQRLDGVPIVLDLCWGSATACGAAVFSELGADVTVLHGEADGERINVDCGSTHLEPLRRAVLERGAAMGFAFDGDADRMLAVDGRGRIVDGDHVLFLWGSALQDSGVLPDQRLVATVMSNLGFERAWQARGGQLDRTPVGDQHVHAAMVRSGAALGGEQSGHILSSAHGLSGDGVLTALQLASLCHGQGITLADWLDRSFEAYPQKLVNVRVPDRSRRKAWADCQSLTALVQEAERSMAGDGRVLVRASGTEPLLRVMVEAADPKAVEHWTQRLAEAADQHLNAA.

The active-site Phosphoserine intermediate is S111. Residues S111, D250, D252, and D254 each contribute to the Mg(2+) site. Position 111 is a phosphoserine (S111).

It belongs to the phosphohexose mutase family. It depends on Mg(2+) as a cofactor. Activated by phosphorylation.

The catalysed reaction is alpha-D-glucosamine 1-phosphate = D-glucosamine 6-phosphate. Its function is as follows. Catalyzes the conversion of glucosamine-6-phosphate to glucosamine-1-phosphate. This is Phosphoglucosamine mutase from Synechococcus sp. (strain WH7803).